We begin with the raw amino-acid sequence, 146 residues long: Putative pre-16S rRNA nuclease (146 aa).

The protein belongs to the YqgF nuclease family.

The protein resides in the cytoplasm. Functionally, could be a nuclease involved in processing of the 5'-end of pre-16S rRNA. The chain is Putative pre-16S rRNA nuclease from Dechloromonas aromatica (strain RCB).